We begin with the raw amino-acid sequence, 346 residues long: KH domain-containing, RNA-binding, signal transduction-associated protein 2 (346 aa).

The KH domain occupies 65 to 131 (LIPVQQYPKF…AKYAHLSNDL (67 aa)). Positions 175-291 (LSYLNGSDDP…SYESYDDNYS (117 aa)) are disordered. The span at 195–224 (LRLTSTASPRGRGSAAPPAPPGRGAAAPRG) shows a compositional bias: low complexity. Acidic residues predominate over residues 268 to 287 (YGYDDGYDGEYDDQSYESYD).

The protein belongs to the KHDRBS family.

The protein resides in the nucleus. Functionally, RNA-binding protein that plays a role in the regulation of alternative splicing. The chain is KH domain-containing, RNA-binding, signal transduction-associated protein 2 (khdrbs2) from Danio rerio (Zebrafish).